The following is a 193-amino-acid chain: Mediator of RNA polymerase II transcription subunit 30 (193 aa).

Positions 1–20 (MSTPPLAASGMAPGPFAGPQ) are disordered. S2 is subject to N-acetylserine. The segment covering 10–20 (GMAPGPFAGPQ) has biased composition (low complexity). The stretch at 71 to 93 (YQDRLAKLQDHLRQLSILFRKLR) forms a coiled coil.

Belongs to the Mediator complex subunit 30 family. In terms of assembly, component of the Mediator complex, which is composed of MED1, MED4, MED6, MED7, MED8, MED9, MED10, MED11, MED12, MED13, MED13L, MED14, MED15, MED16, MED17, MED18, MED19, MED20, MED21, MED22, MED23, MED24, MED25, MED26, MED27, MED29, MED30, MED31, CCNC, CDK8 and CDC2L6/CDK11. The MED12, MED13, CCNC and CDK8 subunits form a distinct module termed the CDK8 module. Mediator containing the CDK8 module is less active than Mediator lacking this module in supporting transcriptional activation. Individual preparations of the Mediator complex lacking one or more distinct subunits have been variously termed ARC, CRSP, DRIP, PC2, SMCC and TRAP.

Its subcellular location is the nucleus. In terms of biological role, component of the Mediator complex, a coactivator involved in the regulated transcription of nearly all RNA polymerase II-dependent genes. Mediator functions as a bridge to convey information from gene-specific regulatory proteins to the basal RNA polymerase II transcription machinery. Mediator is recruited to promoters by direct interactions with regulatory proteins and serves as a scaffold for the assembly of a functional preinitiation complex with RNA polymerase II and the general transcription factors. The sequence is that of Mediator of RNA polymerase II transcription subunit 30 (MED30) from Bos taurus (Bovine).